Reading from the N-terminus, the 931-residue chain is MPMEKTFDPAAIEAKWARLWESRGLFRPHRPDATPFTIVNPPPNVTGALHIGHALDNTLQDVLIRYERLRGKDALWVVGTDHAGIATQMVVERQLNERQQKRTDFTRDEFVDKVWEWKATSGGQITRQLRRLGCSMDWSREQFTMDPHFTRAVVKVFVDLHKKGLIYRDKRLVNWDPKLKTAISDLEVETHEVQGGFWHFKYPLADGVKLDDGHDHIVVATTRPETMLADMAVAVHPDDARYKSVIGKFVELPITGRRVPVVADEHADPELGSGAVKITPGHDFNDFEVGKRAGFKPAEMLNMFDGDANVIQTADGLIPAEYLGLHRFKRDGIDGARELVVQRMKETGFLIPHTDKDGNAHDAEPRTIQTPFGDRGGVVIEPWLTDQWYVDAEKLAQAPIQAVRDGRIQIVPKTWEKTFFNWMENIQPWCVSRQLWWGHRIPAWYAEDGRTFVAETEEEAQAEAGAGVILTRDPDVLDTWFSSALWPFATLGWPDDTELLKRHYPNDVLISGFDILFFWDARMAMQGMEFMGEVPWRTLYLHGLVRAPDGQKMSKSKGNVVDPIGLIDQYGADALRFFMCAMESQGRDIKMDDARLAGYRNFATKLWNAARFCEANGIAASTSLEAPAATLPVNRWIIGEVADTVAAVEAAFAAYRFDDAANAIYSFAWDRFCDWYLELIKPVLSQKPSPLQGRGLGEGDEAVPAPADGPLSPALSPEGEREIAETRAVAGWVLDQILVMLHPFMPFITEELWTGLGDRADYPLITAKWPAPNAARDAAASADIDWLIKLVSELRTAKAELGLPPGARLTAHFPASLKDRADKLAAQLDRLARLETISFDPAPAGASAQLVVEGETITIPLEGVIDIAAERERLTRALAAATKERDSLAGRLNNPSFVERAKPEAVEKARTDHAAKEAEADRLSAALARLG.

The short motif at 43 to 53 (PNVTGALHIGH) is the 'HIGH' region element. The interval 351–370 (IPHTDKDGNAHDAEPRTIQT) is disordered. Residues 353–365 (HTDKDGNAHDAEP) are compositionally biased toward basic and acidic residues. A 'KMSKS' region motif is present at residues 552 to 556 (KMSKS). Lys-555 contributes to the ATP binding site. The tract at residues 691 to 717 (LQGRGLGEGDEAVPAPADGPLSPALSP) is disordered. Residues 864–930 (VIDIAAERER…DRLSAALARL (67 aa)) are a coiled coil.

Belongs to the class-I aminoacyl-tRNA synthetase family. ValS type 1 subfamily. As to quaternary structure, monomer.

It localises to the cytoplasm. The enzyme catalyses tRNA(Val) + L-valine + ATP = L-valyl-tRNA(Val) + AMP + diphosphate. Functionally, catalyzes the attachment of valine to tRNA(Val). As ValRS can inadvertently accommodate and process structurally similar amino acids such as threonine, to avoid such errors, it has a 'posttransfer' editing activity that hydrolyzes mischarged Thr-tRNA(Val) in a tRNA-dependent manner. The polypeptide is Valine--tRNA ligase (Sphingopyxis alaskensis (strain DSM 13593 / LMG 18877 / RB2256) (Sphingomonas alaskensis)).